Here is a 235-residue protein sequence, read N- to C-terminus: Aspartate/glutamate leucyltransferase (235 aa).

This sequence belongs to the R-transferase family. Bpt subfamily.

It is found in the cytoplasm. It carries out the reaction N-terminal L-glutamyl-[protein] + L-leucyl-tRNA(Leu) = N-terminal L-leucyl-L-glutamyl-[protein] + tRNA(Leu) + H(+). The enzyme catalyses N-terminal L-aspartyl-[protein] + L-leucyl-tRNA(Leu) = N-terminal L-leucyl-L-aspartyl-[protein] + tRNA(Leu) + H(+). In terms of biological role, functions in the N-end rule pathway of protein degradation where it conjugates Leu from its aminoacyl-tRNA to the N-termini of proteins containing an N-terminal aspartate or glutamate. The sequence is that of Aspartate/glutamate leucyltransferase from Pseudomonas putida (strain W619).